A 374-amino-acid polypeptide reads, in one-letter code: Ribosomal RNA large subunit methyltransferase G (374 aa).

Belongs to the methyltransferase superfamily. RlmG family.

It localises to the cytoplasm. The catalysed reaction is guanosine(1835) in 23S rRNA + S-adenosyl-L-methionine = N(2)-methylguanosine(1835) in 23S rRNA + S-adenosyl-L-homocysteine + H(+). Specifically methylates the guanine in position 1835 (m2G1835) of 23S rRNA. This Ectopseudomonas mendocina (strain ymp) (Pseudomonas mendocina) protein is Ribosomal RNA large subunit methyltransferase G.